We begin with the raw amino-acid sequence, 380 residues long: MAPNLRKSHPLLKMVNDSLIDLPTPSNISTWWNFGSLLGLCLMTQILTGLLLAMHYTADTTLAFSSVAHTCRNVQYGWLIRNLHANGASFFFICIYLHIGRGFYYGSYLYKETWNTGVILLLTLMATAFVGYVLPWGQMSFWGATVITNLFSAIPYIGQTLVEWAWGGFSVDNPTLTRFFALHFLLPFMIAGLTLIHLTFLHETGSNNPLGVSSNCDKIPFHPYFSTKDLLGFLLMIAPLLTLAMFSPNLLGDPENFTPANPLVTPPHIKPEWYFLFAYAILRSIPNKLGGVLALAASVLILFLAPFLHKSKQRTMTFRPLSQLLFWILVANLLILTWVGSQPVEHPFIIIGQIASLTYFTILLILFPLTSALENKMLNY.

The next 4 membrane-spanning stretches (helical) occupy residues 34-54 (FGSL…LLAM), 78-99 (WLIR…YLHI), 114-134 (WNTG…GYVL), and 179-199 (FFAL…IHLT). The heme b site is built by His84 and His98. Residues His183 and His197 each contribute to the heme b site. His202 serves as a coordination point for a ubiquinone. Transmembrane regions (helical) follow at residues 227–247 (TKDL…AMFS), 289–309 (LGGV…PFLH), 321–341 (LSQL…WVGS), and 348–368 (FIII…ILFP).

Belongs to the cytochrome b family. As to quaternary structure, the cytochrome bc1 complex contains 11 subunits: 3 respiratory subunits (MT-CYB, CYC1 and UQCRFS1), 2 core proteins (UQCRC1 and UQCRC2) and 6 low-molecular weight proteins (UQCRH/QCR6, UQCRB/QCR7, UQCRQ/QCR8, UQCR10/QCR9, UQCR11/QCR10 and a cleavage product of UQCRFS1). This cytochrome bc1 complex then forms a dimer. Heme b serves as cofactor.

The protein localises to the mitochondrion inner membrane. Functionally, component of the ubiquinol-cytochrome c reductase complex (complex III or cytochrome b-c1 complex) that is part of the mitochondrial respiratory chain. The b-c1 complex mediates electron transfer from ubiquinol to cytochrome c. Contributes to the generation of a proton gradient across the mitochondrial membrane that is then used for ATP synthesis. This chain is Cytochrome b (MT-CYB), found in Amazilia tzacatl (Rufous-tailed hummingbird).